We begin with the raw amino-acid sequence, 287 residues long: U-megalopygitoxin(8)-Mo12 (287 aa).

A signal peptide spans 1–17; it reads MNLQYLILSLLSTTVYG. His-284 carries the post-translational modification Histidine amide.

This sequence belongs to the megalysin family. In terms of processing, contains 2 disulfide bonds. As to expression, expressed by the venom apparatus.

The protein localises to the secreted. It is found in the target cell membrane. Its function is as follows. May function as a large pore-forming protein. This Megalopyge opercularis (Southern flannel moth) protein is U-megalopygitoxin(8)-Mo12.